A 263-amino-acid polypeptide reads, in one-letter code: MWELRSASFWRAIFAEFFATLFYVFFGLGASLRWTPGPLHVLQVALAFGLALATLVQAVGHISGAHVNPAVTFAFLVGSQMSLLRAFCYMAAQLLGAVAGAAVLYSVTPPAVRGNLALNTLHPGVSVGQATTVEIFLTLQFVLCIFATYDERRNGRLGSVALAVGFSLTLGHLFGMYYTGAGMNPARSFAPAILTRNFTNHWVYWVGPIIGGGLGSLLYDFLLFPRLKSVSERLSILKGARPSDSNGQPEGTGEPVELKTQAL.

Topologically, residues 1-9 are cytoplasmic; the sequence is MWELRSASF. Residues 10–29 form a helical membrane-spanning segment; sequence WRAIFAEFFATLFYVFFGLG. At 30–41 the chain is on the extracellular side; the sequence is ASLRWTPGPLHV. Residues 42-59 traverse the membrane as a helical segment; it reads LQVALAFGLALATLVQAV. The Cytoplasmic segment spans residues 60-61; it reads GH. Residues 62–77 constitute an intramembrane region (discontinuously helical); it reads ISGAHVNPAVTFAFLV. The NPA 1 motif lies at 68–70; the sequence is NPA. The Cytoplasmic portion of the chain corresponds to 78 to 82; sequence GSQMS. Residues 83–106 traverse the membrane as a helical segment; the sequence is LLRAFCYMAAQLLGAVAGAAVLYS. Over 107-127 the chain is Extracellular; the sequence is VTPPAVRGNLALNTLHPGVSV. Residues 128–148 form a helical membrane-spanning segment; that stretch reads GQATTVEIFLTLQFVLCIFAT. Residues 149–156 lie on the Cytoplasmic side of the membrane; the sequence is YDERRNGR. Residues 157–175 form a helical membrane-spanning segment; sequence LGSVALAVGFSLTLGHLFG. Topologically, residues 176–178 are extracellular; sequence MYY. An intramembrane region (discontinuously helical) is located at residues 179-193; that stretch reads TGAGMNPARSFAPAI. The short motif at 184–186 is the NPA 2 element; it reads NPA. Over 194–200 the chain is Extracellular; it reads LTRNFTN. A helical membrane pass occupies residues 201-222; it reads HWVYWVGPIIGGGLGSLLYDFL. Residues 223–263 are Cytoplasmic-facing; sequence LFPRLKSVSERLSILKGARPSDSNGQPEGTGEPVELKTQAL. The interval 227–237 is interaction with CALM; that stretch reads LKSVSERLSIL. Phosphoserine is present on residues serine 235, serine 243, and serine 245. The segment at 240 to 263 is disordered; it reads ARPSDSNGQPEGTGEPVELKTQAL. Asparagine 246 bears the Deamidated asparagine mark.

It belongs to the MIP/aquaporin (TC 1.A.8) family. In terms of assembly, homotetramer; each monomer provides an independent water pore. Two homotetramers on opposing membranes can dimerize, forming a cell-cell junction. Interacts with CALM; the calcium-calmodulin/CALM complex interacts with the cytoplasmic domains of two aquaporins, leading to channel closure. Interacts with BFSP1 (via C-terminus); prevents calcium-dependent inhibition of the water channel activity. Subject to partial proteolytic cleavage in the eye lens core. Partial proteolysis promotes interactions between tetramers from adjoining membranes. Post-translationally, fatty acylated at Met-1 and Lys-238. The acyl modifications, in decreasing order of ion abundance, are: oleoyl (C18:1) &gt; palmitoyl (C16:0) &gt; stearoyl (C18:0) &gt; eicosenoyl (C20:1) &gt; dihomo-gamma-linolenoyl (C20:3) &gt; palmitoleoyl (C16:1) &gt; eicosadienoyl (C20:2).

The protein resides in the cell membrane. Its subcellular location is the cell junction. It carries out the reaction H2O(in) = H2O(out). Its activity is regulated as follows. The water channel activity is inhibited by calcium through calmodulin/CALM. Aquaporins form homotetrameric transmembrane channels, with each monomer independently mediating water transport across the plasma membrane along its osmotic gradient. Specifically expressed in lens fiber cells, this aquaporin is crucial for maintaining lens water homeostasis and transparency. Beyond water permeability, it also acts as a cell-to-cell adhesion molecule, forming thin junctions between lens fiber cells that are essential for maintaining the ordered structure and transparency of the lens. The polypeptide is Lens fiber major intrinsic protein (Canis lupus familiaris (Dog)).